Reading from the N-terminus, the 362-residue chain is 3-isopropylmalate dehydrogenase (362 aa).

77–88 contributes to the NAD(+) binding site; the sequence is GPKWGTGAVRPE. Positions 95, 105, 134, and 223 each coordinate substrate. Residues Asp-223, Asp-248, and Asp-252 each contribute to the Mg(2+) site. 287-298 is an NAD(+) binding site; that stretch reads GSAPDLPKGKVN.

The protein belongs to the isocitrate and isopropylmalate dehydrogenases family. In terms of assembly, homodimer. Mg(2+) serves as cofactor. It depends on Mn(2+) as a cofactor.

Its subcellular location is the cytoplasm. The enzyme catalyses (2R,3S)-3-isopropylmalate + NAD(+) = 4-methyl-2-oxopentanoate + CO2 + NADH. The protein operates within amino-acid biosynthesis; L-leucine biosynthesis; L-leucine from 3-methyl-2-oxobutanoate: step 3/4. In terms of biological role, catalyzes the oxidation of 3-carboxy-2-hydroxy-4-methylpentanoate (3-isopropylmalate) to 3-carboxy-4-methyl-2-oxopentanoate. The product decarboxylates to 4-methyl-2 oxopentanoate. This Zygosaccharomyces bailii protein is 3-isopropylmalate dehydrogenase (LEU2).